The sequence spans 303 residues: Mitochondrial carrier homolog 2 (303 aa).

Ala-2 carries the post-translational modification N-acetylalanine. Topologically, residues 2-15 are mitochondrial intermembrane; it reads ADAASQVLLGSGLT. Solcar repeat units lie at residues 2–98 and 118–206; these read ADAA…YQES and DRVI…INTY. The helical transmembrane segment at 16–36 threads the bilayer; the sequence is ILSQPLMYVKVLIQVGYEPLP. The Cytoplasmic segment spans residues 37–77; sequence PTIGRNIFGRQVCQLPGLFCYAQHIASIDGRRGLFTGLTPR. The helical transmembrane segment at 78-92 threads the bilayer; the sequence is LCSGVLGTVVHGKVL. At 93 to 135 the chain is on the mitochondrial intermembrane side; that stretch reads QYYQESEKPEELGSVTVQKEYSSSFDRVIKETTREMIARSAAT. Residues 136 to 156 traverse the membrane as a helical segment; the sequence is LITHPFHVITLRSMVQFIGRE. Residues 157–180 lie on the Cytoplasmic side of the membrane; sequence SKYCGLCDSIVTIYREEGIVGFFA. The helical transmembrane segment at 181–199 threads the bilayer; sequence GLIPRLLGDIISLWLCNSL. At 200 to 231 the chain is on the mitochondrial intermembrane side; that stretch reads AYLINTYALDSGVSTMNEMKSYSQAVTGFFAS. A helical membrane pass occupies residues 232–252; the sequence is MLTYPFVLVSNLMAVNNCGLA. Residues 253–280 are Cytoplasmic-facing; that stretch reads GGSPPYSPIYTSWIDCWCMLQKAGNMSR. Residues 281-303 form a helical membrane-spanning segment; the sequence is GNSLFFRKVPCGKTYCYDLRMLI.

This sequence belongs to the mitochondrial carrier (TC 2.A.29) family. In terms of assembly, interacts with p15BID. In terms of tissue distribution, expressed in a wide variety of tissues. Predominant expressed in liver, kidney, heart, skeletal muscle and testis.

It is found in the mitochondrion outer membrane. In terms of biological role, protein insertase that mediates insertion of transmembrane proteins into the mitochondrial outer membrane. Catalyzes insertion of proteins with alpha-helical transmembrane regions, such as signal-anchored, tail-anchored and multi-pass membrane proteins. Does not mediate insertion of beta-barrel transmembrane proteins. Also acts as a receptor for the truncated form of pro-apoptotic BH3-interacting domain death agonist (p15 BID) and has therefore a critical function in apoptosis. Regulates the quiescence/cycling of hematopoietic stem cells (HSCs). Acts as a regulator of mitochondrial fusion, essential for the naive-to-primed interconversion of embryonic stem cells (ESCs). Acts as a regulator of lipid homeostasis and has a regulatory role in adipocyte differentiation and biology. In Mus musculus (Mouse), this protein is Mitochondrial carrier homolog 2.